Reading from the N-terminus, the 237-residue chain is MANPFFQFKQFTVWHDKCAMKVGTDGVLLGAWASVQGAHRILDIGTGTGLVALMLAQRSLPDANIVALEIDEAAAGQAKENVARSPWKDRIEVVKQDFLFYQSPDKFDVIVSNPPYFVDSLSCPDQQRSMARHNDSLTYEKLLKGVADLLKKEGTFTIVIPTDVADRVKTAASEYHLYATRQLNVITKPGGTPKRMLITFTFNNEGCIKEELLTEVARHQYSEEYKELTREYYLHLK.

This sequence belongs to the methyltransferase superfamily. tRNA (adenine-N(6)-)-methyltransferase family.

It is found in the cytoplasm. It carries out the reaction adenosine(37) in tRNA1(Val) + S-adenosyl-L-methionine = N(6)-methyladenosine(37) in tRNA1(Val) + S-adenosyl-L-homocysteine + H(+). Specifically methylates the adenine in position 37 of tRNA(1)(Val) (anticodon cmo5UAC). The polypeptide is tRNA1(Val) (adenine(37)-N6)-methyltransferase (Bacteroides thetaiotaomicron (strain ATCC 29148 / DSM 2079 / JCM 5827 / CCUG 10774 / NCTC 10582 / VPI-5482 / E50)).